Consider the following 556-residue polypeptide: Interleukin-1 receptor-like 1 (556 aa).

Positions 1–18 (MGFWILAILTILMYSTAA) are cleaved as a signal peptide. Ig-like C2-type domains are found at residues 19-103 (KFSK…ANVT) and 114-197 (PDYL…VTAT). Over 19 to 328 (KFSKQSWGLE…SRKNPIDHHS (310 aa)) the chain is Extracellular. The cysteines at positions 36 and 87 are disulfide-linked. N-linked (GlcNAc...) asparagine glycosylation is found at asparagine 54, asparagine 95, asparagine 101, asparagine 140, and asparagine 191. 2 disulfide bridges follow: cysteine 111–cysteine 151 and cysteine 133–cysteine 181. The interval 198 to 211 (RSFTVKDEQGFSLF) is flexible linker. Residues 212 to 319 (PVIGAPAQNE…GLRRHTVRLS (108 aa)) enclose the Ig-like C2-type 3 domain. N-linked (GlcNAc...) asparagine glycans are attached at residues asparagine 232, asparagine 254, and asparagine 273. Disulfide bonds link cysteine 235–cysteine 303 and cysteine 238–cysteine 282. A Glycyl lysine isopeptide (Lys-Gly) (interchain with G-Cter in ubiquitin) cross-link involves residue lysine 321. Residues 329-349 (IYCIIAVCSVFLMLINVLVII) traverse the membrane as a helical segment. The Cytoplasmic portion of the chain corresponds to 350–556 (LKMFWIEATL…SLTPLAAQKQ (207 aa)). Residues 375–535 (KLYDAYVVYP…KFWKHVRYQM (161 aa)) enclose the TIR domain. The active site involves glutamate 461.

This sequence belongs to the interleukin-1 receptor family. In terms of assembly, interacts with MYD88, IRAK1, IRAK4, and TRAF6. Bound to its ligand IL-33, interacts with IL1RAP to form the minimal interleukin-33 signaling complex with a 1:1:1 stoichiometry. Interacts with KIT (bound to KITLG/SCF). A mast cell-specific KITLG/SCF-induced interleukin-33 signaling complex contains IL1RL1, IL1RAP, KIT and MYD88. Interacts with TMED1. Ubiquitinated at Lys-321 in a FBXL19-mediated manner; leading to proteasomal degradation. Ubiquitination by TRAF6 via 'Lys-27'-linked polyubiquitination and deubiquitination by USP38 serves as a critical regulatory mechanism for fine-tuning IL1RL1-mediated inflammatory response. As to expression, highly expressed in kidney, lung, placenta, stomach, skeletal muscle, colon and small intestine. Isoform A is prevalently expressed in the lung, testis, placenta, stomach and colon. Isoform B is more abundant in the brain, kidney and the liver. Isoform C is not detected in brain, heart, liver, kidney and skeletal muscle. Expressed on T-cells in fibrotic liver; at protein level. Overexpressed in fibrotic and cirrhotic liver.

It localises to the cell membrane. It is found in the secreted. The enzyme catalyses NAD(+) + H2O = ADP-D-ribose + nicotinamide + H(+). In terms of biological role, receptor for interleukin-33 (IL-33) which plays crucial roles in innate and adaptive immunity, contributing to tissue homeostasis and responses to environmental stresses together with coreceptor IL1RAP. Its stimulation recruits MYD88, IRAK1, IRAK4, and TRAF6, followed by phosphorylation of MAPK3/ERK1 and/or MAPK1/ERK2, MAPK14, and MAPK8. Possibly involved in helper T-cell function. Upon tissue injury, induces UCP2-dependent mitochondrial rewiring that attenuates the generation of reactive oxygen species and preserves the integrity of Krebs cycle required for persistent production of itaconate and subsequent GATA3-dependent differentiation of inflammation-resolving alternatively activated macrophages. Inhibits IL-33 signaling. This chain is Interleukin-1 receptor-like 1 (IL1RL1), found in Homo sapiens (Human).